The sequence spans 271 residues: Ribosomal RNA small subunit methyltransferase A (271 aa).

Residues Asn28, Leu30, Gly54, Glu75, Asp99, and Asn117 each coordinate S-adenosyl-L-methionine.

The protein belongs to the class I-like SAM-binding methyltransferase superfamily. rRNA adenine N(6)-methyltransferase family. RsmA subfamily.

Its subcellular location is the cytoplasm. It catalyses the reaction adenosine(1518)/adenosine(1519) in 16S rRNA + 4 S-adenosyl-L-methionine = N(6)-dimethyladenosine(1518)/N(6)-dimethyladenosine(1519) in 16S rRNA + 4 S-adenosyl-L-homocysteine + 4 H(+). Its function is as follows. Specifically dimethylates two adjacent adenosines (A1518 and A1519) in the loop of a conserved hairpin near the 3'-end of 16S rRNA in the 30S particle. May play a critical role in biogenesis of 30S subunits. The sequence is that of Ribosomal RNA small subunit methyltransferase A from Thermus thermophilus (strain ATCC BAA-163 / DSM 7039 / HB27).